Consider the following 450-residue polypeptide: Phosphoglucosamine mutase (450 aa).

S102 functions as the Phosphoserine intermediate in the catalytic mechanism. Residues S102, D243, D245, and D247 each coordinate Mg(2+). S102 is subject to Phosphoserine.

Belongs to the phosphohexose mutase family. It depends on Mg(2+) as a cofactor. Post-translationally, activated by phosphorylation.

It carries out the reaction alpha-D-glucosamine 1-phosphate = D-glucosamine 6-phosphate. In terms of biological role, catalyzes the conversion of glucosamine-6-phosphate to glucosamine-1-phosphate. In Rhizobium etli (strain CIAT 652), this protein is Phosphoglucosamine mutase.